The primary structure comprises 247 residues: UPF0309 protein GWCH70_1414 (247 aa).

The SIS domain maps to 31–214 (VSEAIQKGGI…VLMAENGFEP (184 aa)).

The protein belongs to the UPF0309 family.

The polypeptide is UPF0309 protein GWCH70_1414 (Geobacillus sp. (strain WCH70)).